The primary structure comprises 328 residues: Probable cell division protein WhiA (328 aa).

Residues 275 to 308 constitute a DNA-binding region (H-T-H motif); it reads SLEELGQLHDPVLTKDAIAGRIRRLLAMADKRAE.

It belongs to the WhiA family.

Involved in cell division and chromosome segregation. This Nocardioides sp. (strain ATCC BAA-499 / JS614) protein is Probable cell division protein WhiA.